The primary structure comprises 590 residues: Aspartate--tRNA(Asp/Asn) ligase (590 aa).

Residue Glu-170 participates in L-aspartate binding. The segment at Gln-194 to Lys-197 is aspartate. Arg-216 lines the L-aspartate pocket. ATP is bound by residues Arg-216–Glu-218 and Gln-225. Position 448 (His-448) interacts with L-aspartate. Glu-482 contacts ATP. Arg-489 contacts L-aspartate. Residue Gly-534–Arg-537 coordinates ATP. The disordered stretch occupies residues Gly-559 to Ala-590. The segment covering Gln-575 to Ala-590 has biased composition (basic and acidic residues).

It belongs to the class-II aminoacyl-tRNA synthetase family. Type 1 subfamily. As to quaternary structure, homodimer.

The protein resides in the cytoplasm. It carries out the reaction tRNA(Asx) + L-aspartate + ATP = L-aspartyl-tRNA(Asx) + AMP + diphosphate. Its function is as follows. Aspartyl-tRNA synthetase with relaxed tRNA specificity since it is able to aspartylate not only its cognate tRNA(Asp) but also tRNA(Asn). Reaction proceeds in two steps: L-aspartate is first activated by ATP to form Asp-AMP and then transferred to the acceptor end of tRNA(Asp/Asn). This is Aspartate--tRNA(Asp/Asn) ligase from Mycolicibacterium gilvum (strain PYR-GCK) (Mycobacterium gilvum (strain PYR-GCK)).